We begin with the raw amino-acid sequence, 381 residues long: Creatine kinase M-type (381 aa).

The region spanning 11–98 (KLNYKPEEEY…FDPIISDRHG (88 aa)) is the Phosphagen kinase N-terminal domain. The 243-residue stretch at 125 to 367 (YVLSSRVRTG…KLMVEMEKKL (243 aa)) folds into the Phosphagen kinase C-terminal domain. Position 128–132 (128–132 (SSRVR)) interacts with ATP. Residue serine 164 is modified to Phosphoserine. Phosphothreonine is present on threonine 166. At serine 178 the chain carries Phosphoserine. Phosphothreonine is present on threonine 180. Position 191 (histidine 191) interacts with ATP. Residue serine 199 is modified to Phosphoserine. The ATP site is built by arginine 236 and arginine 292. Phosphothreonine occurs at positions 313 and 322. ATP-binding positions include 320 to 325 (RGTGGV) and aspartate 335. Serine 372 is modified (phosphoserine).

This sequence belongs to the ATP:guanido phosphotransferase family. Dimer of identical or non-identical chains, which can be either B (brain type) or M (muscle type). With MM being the major form in skeletal muscle and myocardium, MB existing in myocardium, and BB existing in many tissues, especially brain.

Its subcellular location is the cytoplasm. The enzyme catalyses creatine + ATP = N-phosphocreatine + ADP + H(+). Its function is as follows. Reversibly catalyzes the transfer of phosphate between ATP and various phosphogens (e.g. creatine phosphate). Creatine kinase isoenzymes play a central role in energy transduction in tissues with large, fluctuating energy demands, such as skeletal muscle, heart, brain and spermatozoa. This chain is Creatine kinase M-type (CKM), found in Homo sapiens (Human).